The sequence spans 115 residues: Toxin-like structure LSTX-D2 (115 aa).

The N-terminal stretch at Met1 to Ala22 is a signal peptide. The propeptide occupies Ile23 to Arg44. 4 cysteine pairs are disulfide-bonded: Cys48/Cys63, Cys55/Cys72, Cys62/Cys87, and Cys74/Cys85.

The protein belongs to the neurotoxin 19 (CSTX) family. 01 subfamily. In terms of tissue distribution, expressed by the venom gland.

The protein resides in the secreted. In Lycosa singoriensis (Wolf spider), this protein is Toxin-like structure LSTX-D2.